Reading from the N-terminus, the 209-residue chain is Thymidylate kinase (209 aa).

Residue 10-17 coordinates ATP; the sequence is GIDGCGKS.

Belongs to the thymidylate kinase family.

It catalyses the reaction dTMP + ATP = dTDP + ADP. In terms of biological role, phosphorylation of dTMP to form dTDP in both de novo and salvage pathways of dTTP synthesis. The chain is Thymidylate kinase from Synechococcus sp. (strain CC9902).